The sequence spans 99 residues: MVSIKEHLEELLESFDYSGDVEERIRLLRAAIGRIGNMFYGTENEEIYADQVRRIKLRLRELRETYATSEDNWRELMDNLEELRDQIERLAIRGGIIEK.

Residues 43–95 (ENEEIYADQVRRIKLRLRELRETYATSEDNWRELMDNLEELRDQIERLAIRGG) adopt a coiled-coil conformation.

This is an uncharacterized protein from Archaeoglobus fulgidus (strain ATCC 49558 / DSM 4304 / JCM 9628 / NBRC 100126 / VC-16).